We begin with the raw amino-acid sequence, 302 residues long: Ubiquitin thioesterase OTU1 (302 aa).

Residues 5 to 83 form a UBX-like region; the sequence is RCKARSGTQP…IVEEDTSKPS (79 aa). The region spanning 103-228 is the OTU domain; it reads LARRVVPADN…GIHYDPLERK (126 aa). Residues 108 to 114 are cys-loop; the sequence is VPADNSC. Residue D111 is part of the active site. The active-site Nucleophile is C114. Residues 167 to 177 are variable-loop; the sequence is IRREETWGGAI. Positions 217 to 221 are his-loop; sequence YDGIH. Position 220 (I220) interacts with substrate. The active site involves H221. The S2 site stretch occupies residues 245-250; that stretch reads DVVLAQ. Residues 272-296 form a C2H2-type zinc finger; it reads LRCMVCQKGLTGQVEAREHAKETGH. H296 is an active-site residue.

The protein localises to the cytoplasm. It catalyses the reaction Thiol-dependent hydrolysis of ester, thioester, amide, peptide and isopeptide bonds formed by the C-terminal Gly of ubiquitin (a 76-residue protein attached to proteins as an intracellular targeting signal).. In terms of biological role, hydrolase that can remove conjugated ubiquitin from proteins and participates in endoplasmic reticulum-associated degradation (ERAD) for misfolded lumenal proteins. May act by triming the ubiquitin chain on the associated substrate to facilitate their threading through the VCP/p97 pore. Ubiquitin moieties on substrates may present a steric impediment to the threading process when the substrate is transferred to the VCP pore and threaded through VCP's axial channel. Mediates deubiquitination of 'Lys-27'-, 'Lys-29'- and 'Lys-33'-linked polyubiquitin chains. Also able to hydrolyze 'Lys-11'-linked ubiquitin chains. Cleaves both polyubiquitin and di-ubiquitin. The sequence is that of Ubiquitin thioesterase OTU1 (YOD1) from Gallus gallus (Chicken).